The chain runs to 549 residues: Cytoplasmic trehalase (549 aa).

Substrate contacts are provided by residues Arg168, 175 to 176 (WD), Asn212, 221 to 223 (RSQ), 292 to 294 (RDE), and Gly324. Residues Asp326 and Glu509 each act as proton donor/acceptor in the active site. A substrate-binding site is contributed by Glu525.

The protein belongs to the glycosyl hydrolase 37 family. Monomer.

The protein localises to the cytoplasm. The catalysed reaction is alpha,alpha-trehalose + H2O = alpha-D-glucose + beta-D-glucose. It functions in the pathway glycan degradation; trehalose degradation; D-glucose from alpha,alpha-trehalose: step 1/1. Hydrolyzes trehalose to glucose. Could be involved, in cells returning to low osmolarity conditions, in the utilization of the accumulated cytoplasmic trehalose, which was synthesized in response to high osmolarity. This chain is Cytoplasmic trehalase, found in Escherichia coli O139:H28 (strain E24377A / ETEC).